Consider the following 290-residue polypeptide: MAALRVLLSCVRGPLRPPVRCPAWRPFASGANFEYIIAEKRGKNNTVGLIQLNRPKALNALCDGLIDELNQALKTFEEDPAVGAIVLTGGDKAFAAGADIKEMQNLSFQDCYSSKFLKHWDHLTQVKKPVIAAVNGYAFGGGCELAMMCDIIYAGEKAQFAQPEILIGTIPGAGGTQRLTRAVGKSLAMEMVLTGDRISAQDAKQAGLVSKICPVETLVEEAIQCAEKIASNSKIVVAMAKESVNAAFEMTLTEGSKLEKKLFYSTFATDDRKEGMTAFVEKRKANFKDQ.

The transit peptide at 1–27 (MAALRVLLSCVRGPLRPPVRCPAWRPF) directs the protein to the mitochondrion. Phosphothreonine is present on threonine 46. Substrate is bound at residue 98 to 101 (ADIK). The residue at position 101 (lysine 101) is an N6-acetyllysine; alternate. Lysine 101 is modified (N6-succinyllysine; alternate). Serine 114 is modified (phosphoserine). Lysine 115 carries the post-translational modification N6-acetyllysine; alternate. Lysine 115 bears the N6-succinyllysine; alternate mark. N6-acetyllysine is present on lysine 118. Glycine 141 serves as a coordination point for substrate. Position 204 is an N6-succinyllysine (lysine 204). Lysine 211 carries the N6-acetyllysine modification.

The protein belongs to the enoyl-CoA hydratase/isomerase family. Homohexamer; dimer of trimers. In terms of tissue distribution, liver, fibroblast, muscle. Barely detectable in spleen and kidney.

The protein resides in the mitochondrion matrix. The enzyme catalyses a (3S)-3-hydroxyacyl-CoA = a (2E)-enoyl-CoA + H2O. The catalysed reaction is a (3E)-enoyl-CoA = a 4-saturated (2E)-enoyl-CoA. It carries out the reaction (3E)-hexenoyl-CoA = (2E)-hexenoyl-CoA. It catalyses the reaction (3S)-3-hydroxybutanoyl-CoA = (2E)-butenoyl-CoA + H2O. The enzyme catalyses 3-hydroxyisovaleryl-CoA = 3-methylbut-2-enoyl-CoA + H2O. The catalysed reaction is 3-hydroxypropanoyl-CoA = acryloyl-CoA + H2O. It carries out the reaction 3-hydroxybutanoyl-CoA = (2E)-butenoyl-CoA + H2O. It catalyses the reaction 2-methylpropenoyl-CoA + H2O = (S)-3-hydroxyisobutanoyl-CoA. The enzyme catalyses (3S)-hydroxyhexanoyl-CoA = (2E)-hexenoyl-CoA + H2O. The catalysed reaction is (3S)-hydroxydecanoyl-CoA = (2E)-decenoyl-CoA + H2O. It participates in lipid metabolism; fatty acid beta-oxidation. Its function is as follows. Converts unsaturated trans-2-enoyl-CoA species ((2E)-enoyl-CoA) to the corresponding (3S)-3hydroxyacyl-CoA species through addition of a water molecule to the double bond. Catalyzes the hydration of medium- and short-chained fatty enoyl-CoA thioesters from 4 carbons long (C4) up to C16. Has high substrate specificity for crotonyl-CoA ((2E)-butenoyl-CoA) and moderate specificity for acryloyl-CoA, 3-methylcrotonyl-CoA (3-methyl-(2E)-butenoyl-CoA) and methacrylyl-CoA ((2E)-2-methylpropenoyl-CoA). Can bind tiglyl-CoA (2-methylcrotonoyl-CoA), but hydrates only a small amount of this substrate. Plays a key role in the beta-oxidation spiral of short- and medium-chain fatty acid oxidation. At a lower rate than the hydratase reaction, catalyzes the isomerase reaction of trans-3-enoyl-CoA species (such as (3E)-hexenoyl-CoA) to trans-2-enoyl-CoA species (such as (2E)-hexenoyl-CoA), which are subsequently hydrated to 3(S)-3-hydroxyacyl-CoA species (such as (3S)-hydroxyhexanoyl-CoA). The chain is Enoyl-CoA hydratase, mitochondrial from Homo sapiens (Human).